Consider the following 378-residue polypeptide: Erythronate-4-phosphate dehydrogenase (378 aa).

The substrate site is built by Ser-45 and Thr-66. 2 residues coordinate NAD(+): Asp-146 and Thr-175. Arg-208 is a catalytic residue. Position 232 (Asp-232) interacts with NAD(+). Glu-237 is a catalytic residue. His-254 serves as the catalytic Proton donor. Gly-257 serves as a coordination point for NAD(+). Tyr-258 lines the substrate pocket.

Belongs to the D-isomer specific 2-hydroxyacid dehydrogenase family. PdxB subfamily. As to quaternary structure, homodimer.

The protein resides in the cytoplasm. The enzyme catalyses 4-phospho-D-erythronate + NAD(+) = (R)-3-hydroxy-2-oxo-4-phosphooxybutanoate + NADH + H(+). The protein operates within cofactor biosynthesis; pyridoxine 5'-phosphate biosynthesis; pyridoxine 5'-phosphate from D-erythrose 4-phosphate: step 2/5. Functionally, catalyzes the oxidation of erythronate-4-phosphate to 3-hydroxy-2-oxo-4-phosphonooxybutanoate. This is Erythronate-4-phosphate dehydrogenase from Escherichia fergusonii (strain ATCC 35469 / DSM 13698 / CCUG 18766 / IAM 14443 / JCM 21226 / LMG 7866 / NBRC 102419 / NCTC 12128 / CDC 0568-73).